Here is a 211-residue protein sequence, read N- to C-terminus: Ion-translocating oxidoreductase complex subunit G (211 aa).

The helical transmembrane segment at 9-29 (GLTLAIFACATTGLVAMTQYL) threads the bilayer. An FMN phosphoryl threonine modification is found at threonine 175.

Belongs to the RnfG family. The complex is composed of six subunits: RnfA, RnfB, RnfC, RnfD, RnfE and RnfG. The cofactor is FMN.

The protein resides in the cell inner membrane. Its function is as follows. Part of a membrane-bound complex that couples electron transfer with translocation of ions across the membrane. This is Ion-translocating oxidoreductase complex subunit G from Vibrio vulnificus (strain YJ016).